The sequence spans 232 residues: Pseudaminic acid cytidylyltransferase (232 aa).

The protein belongs to the CMP-NeuNAc synthase family. It depends on Mg(2+) as a cofactor.

It catalyses the reaction pseudaminate + CTP = CMP-pseudaminate + diphosphate. Its function is as follows. Catalyzes the final step in the biosynthesis of pseudaminic acid, a sialic-acid-like sugar that is used to modify flagellin. Mediates the activation of pseudaminic acid with CMP by forming CMP-pseudaminic acid. This Campylobacter jejuni subsp. jejuni serotype O:23/36 (strain 81-176) protein is Pseudaminic acid cytidylyltransferase (pseF).